Here is a 265-residue protein sequence, read N- to C-terminus: Sulfur carrier protein FdhD (265 aa).

Cysteine 107 acts as the Cysteine persulfide intermediate in catalysis.

The protein belongs to the FdhD family.

The protein resides in the cytoplasm. Its function is as follows. Required for formate dehydrogenase (FDH) activity. Acts as a sulfur carrier protein that transfers sulfur from IscS to the molybdenum cofactor prior to its insertion into FDH. The polypeptide is Sulfur carrier protein FdhD (Staphylococcus aureus (strain bovine RF122 / ET3-1)).